A 190-amino-acid chain; its full sequence is Small ribosomal subunit protein mS23 (190 aa).

Residue A2 is modified to N-acetylalanine. K83 carries the N6-succinyllysine modification. Residue K102 is modified to N6-acetyllysine. The interval 137–190 is disordered; it reads KARTQQEGSQVSRKSESMGVESQTALEENPPLKEVPQAQHLESPGEESKGLSPP.

This sequence belongs to the mitochondrion-specific ribosomal protein mS23 family. In terms of assembly, component of the mitochondrial ribosome small subunit (28S) which comprises a 12S rRNA and about 30 distinct proteins.

Its subcellular location is the mitochondrion. The protein is Small ribosomal subunit protein mS23 of Bos taurus (Bovine).